The primary structure comprises 192 residues: Guanylate kinase (192 aa).

Residues 7 to 185 enclose the Guanylate kinase-like domain; it reads GLIIILSSPS…TLKKIHEIIV (179 aa). 14 to 21 is a binding site for ATP; that stretch reads SPSGTGKS.

The protein belongs to the guanylate kinase family.

Its subcellular location is the cytoplasm. The catalysed reaction is GMP + ATP = GDP + ADP. In terms of biological role, essential for recycling GMP and indirectly, cGMP. The sequence is that of Guanylate kinase from Rickettsia felis (strain ATCC VR-1525 / URRWXCal2) (Rickettsia azadi).